A 549-amino-acid chain; its full sequence is Copalyl diphosphate synthase (549 aa).

The DXDDTA motif signature appears at 321–326; sequence DADDTA. The QXXDGSW motif motif lies at 451 to 457; sequence QRDDGSW.

Belongs to the terpene synthase family. Mg(2+) is required as a cofactor.

It carries out the reaction (2E,6E,10E)-geranylgeranyl diphosphate = (+)-copalyl diphosphate. Its function is as follows. Involved in the biosynthesis of the labdane-type bicyclic diterpene labda-8(17),12(E),14-triene. Catalyzes the conversion of geranylgeranyl diphosphate (GGDP) into (+)-copalyl diphosphate. This Streptomyces anulatus (Streptomyces chrysomallus) protein is Copalyl diphosphate synthase.